Here is an 89-residue protein sequence, read N- to C-terminus: Small ribosomal subunit protein uS15 (89 aa).

The protein belongs to the universal ribosomal protein uS15 family. Part of the 30S ribosomal subunit. Forms a bridge to the 50S subunit in the 70S ribosome, contacting the 23S rRNA.

One of the primary rRNA binding proteins, it binds directly to 16S rRNA where it helps nucleate assembly of the platform of the 30S subunit by binding and bridging several RNA helices of the 16S rRNA. Functionally, forms an intersubunit bridge (bridge B4) with the 23S rRNA of the 50S subunit in the ribosome. This Thermobifida fusca (strain YX) protein is Small ribosomal subunit protein uS15.